The primary structure comprises 300 residues: Eukaryotic translation initiation factor 3 subunit F (300 aa).

In terms of domain architecture, MPN spans 33–169 (VKVHPVALFS…VQCYVSALLG (137 aa)).

The protein belongs to the eIF-3 subunit F family. As to quaternary structure, component of the eukaryotic translation initiation factor 3 (eIF-3) complex.

The protein resides in the cytoplasm. In terms of biological role, component of the eukaryotic translation initiation factor 3 (eIF-3) complex, which is involved in protein synthesis of a specialized repertoire of mRNAs and, together with other initiation factors, stimulates binding of mRNA and methionyl-tRNAi to the 40S ribosome. The eIF-3 complex specifically targets and initiates translation of a subset of mRNAs involved in cell proliferation. This Malassezia globosa (strain ATCC MYA-4612 / CBS 7966) (Dandruff-associated fungus) protein is Eukaryotic translation initiation factor 3 subunit F.